The chain runs to 264 residues: Thymidylate synthase (264 aa).

DUMP is bound at residue Arg-21. A (6R)-5,10-methylene-5,6,7,8-tetrahydrofolate-binding site is contributed by His-51. Arg-126–Arg-127 contributes to the dUMP binding site. Cys-146 acts as the Nucleophile in catalysis. DUMP contacts are provided by residues Arg-166–Asp-169, Asn-177, and His-207–Tyr-209. Residue Asp-169 coordinates (6R)-5,10-methylene-5,6,7,8-tetrahydrofolate. Ala-263 is a binding site for (6R)-5,10-methylene-5,6,7,8-tetrahydrofolate.

It belongs to the thymidylate synthase family. Bacterial-type ThyA subfamily. In terms of assembly, homodimer.

The protein resides in the cytoplasm. It carries out the reaction dUMP + (6R)-5,10-methylene-5,6,7,8-tetrahydrofolate = 7,8-dihydrofolate + dTMP. The protein operates within pyrimidine metabolism; dTTP biosynthesis. Catalyzes the reductive methylation of 2'-deoxyuridine-5'-monophosphate (dUMP) to 2'-deoxythymidine-5'-monophosphate (dTMP) while utilizing 5,10-methylenetetrahydrofolate (mTHF) as the methyl donor and reductant in the reaction, yielding dihydrofolate (DHF) as a by-product. This enzymatic reaction provides an intracellular de novo source of dTMP, an essential precursor for DNA biosynthesis. This Bartonella henselae (strain ATCC 49882 / DSM 28221 / CCUG 30454 / Houston 1) (Rochalimaea henselae) protein is Thymidylate synthase.